Reading from the N-terminus, the 255-residue chain is Hydroxyethylthiazole kinase (255 aa).

Met38 is a binding site for substrate. Positions 114 and 160 each coordinate ATP. Residue Gly187 participates in substrate binding.

It belongs to the Thz kinase family. The cofactor is Mg(2+).

The catalysed reaction is 5-(2-hydroxyethyl)-4-methylthiazole + ATP = 4-methyl-5-(2-phosphooxyethyl)-thiazole + ADP + H(+). The protein operates within cofactor biosynthesis; thiamine diphosphate biosynthesis; 4-methyl-5-(2-phosphoethyl)-thiazole from 5-(2-hydroxyethyl)-4-methylthiazole: step 1/1. Functionally, catalyzes the phosphorylation of the hydroxyl group of 4-methyl-5-beta-hydroxyethylthiazole (THZ). This is Hydroxyethylthiazole kinase from Lysinibacillus sphaericus (strain C3-41).